Consider the following 70-residue polypeptide: MGAIAAGIAMAGAAIGGGVGDGIVISKMLEGMARQPELSGQLRTNMFIGVGLVEAMPIIAFVVALMVMNK.

The next 2 helical transmembrane spans lie at 4–24 and 47–67; these read IAAGIAMAGAAIGGGVGDGIV and FIGVGLVEAMPIIAFVVALMV.

This sequence belongs to the ATPase C chain family. In terms of assembly, F-type ATPases have 2 components, F(1) - the catalytic core - and F(0) - the membrane proton channel. F(1) has five subunits: alpha(3), beta(3), gamma(1), delta(1), epsilon(1). F(0) has three main subunits: a(1), b(2) and c(10-14). The alpha and beta chains form an alternating ring which encloses part of the gamma chain. F(1) is attached to F(0) by a central stalk formed by the gamma and epsilon chains, while a peripheral stalk is formed by the delta and b chains.

The protein resides in the cell membrane. Its function is as follows. F(1)F(0) ATP synthase produces ATP from ADP in the presence of a proton or sodium gradient. F-type ATPases consist of two structural domains, F(1) containing the extramembraneous catalytic core and F(0) containing the membrane proton channel, linked together by a central stalk and a peripheral stalk. During catalysis, ATP synthesis in the catalytic domain of F(1) is coupled via a rotary mechanism of the central stalk subunits to proton translocation. In terms of biological role, key component of the F(0) channel; it plays a direct role in translocation across the membrane. A homomeric c-ring of between 10-14 subunits forms the central stalk rotor element with the F(1) delta and epsilon subunits. The sequence is that of ATP synthase subunit c from Levilactobacillus brevis (strain ATCC 367 / BCRC 12310 / CIP 105137 / JCM 1170 / LMG 11437 / NCIMB 947 / NCTC 947) (Lactobacillus brevis).